A 331-amino-acid polypeptide reads, in one-letter code: Ketol-acid reductoisomerase (NADP(+)) (331 aa).

Positions 2–182 constitute a KARI N-terminal Rossmann domain; it reads AQLFYDSDAD…GGTRAGILET (181 aa). NADP(+)-binding positions include 25-28, Ser51, Ser53, and 83-86; these read YGSQ and DEFQ. His108 is a catalytic residue. Position 134 (Gly134) interacts with NADP(+). Residues 183–328 enclose the KARI C-terminal knotted domain; the sequence is NFKEETETDL…KGLRSMFSWL (146 aa). Mg(2+)-binding residues include Asp191, Glu195, Glu227, and Glu231. Ser252 lines the substrate pocket.

Belongs to the ketol-acid reductoisomerase family. Mg(2+) serves as cofactor.

It catalyses the reaction (2R)-2,3-dihydroxy-3-methylbutanoate + NADP(+) = (2S)-2-acetolactate + NADPH + H(+). The catalysed reaction is (2R,3R)-2,3-dihydroxy-3-methylpentanoate + NADP(+) = (S)-2-ethyl-2-hydroxy-3-oxobutanoate + NADPH + H(+). It participates in amino-acid biosynthesis; L-isoleucine biosynthesis; L-isoleucine from 2-oxobutanoate: step 2/4. Its pathway is amino-acid biosynthesis; L-valine biosynthesis; L-valine from pyruvate: step 2/4. Its function is as follows. Involved in the biosynthesis of branched-chain amino acids (BCAA). Catalyzes an alkyl-migration followed by a ketol-acid reduction of (S)-2-acetolactate (S2AL) to yield (R)-2,3-dihydroxy-isovalerate. In the isomerase reaction, S2AL is rearranged via a Mg-dependent methyl migration to produce 3-hydroxy-3-methyl-2-ketobutyrate (HMKB). In the reductase reaction, this 2-ketoacid undergoes a metal-dependent reduction by NADPH to yield (R)-2,3-dihydroxy-isovalerate. The protein is Ketol-acid reductoisomerase (NADP(+)) of Synechococcus sp. (strain CC9902).